Consider the following 153-residue polypeptide: Ribosomal RNA large subunit methyltransferase H (153 aa).

S-adenosyl-L-methionine is bound by residues Leu70, Gly102, and 121–126 (LSAMTF).

The protein belongs to the RNA methyltransferase RlmH family. Homodimer.

It is found in the cytoplasm. The catalysed reaction is pseudouridine(1915) in 23S rRNA + S-adenosyl-L-methionine = N(3)-methylpseudouridine(1915) in 23S rRNA + S-adenosyl-L-homocysteine + H(+). Its function is as follows. Specifically methylates the pseudouridine at position 1915 (m3Psi1915) in 23S rRNA. This Trichlorobacter lovleyi (strain ATCC BAA-1151 / DSM 17278 / SZ) (Geobacter lovleyi) protein is Ribosomal RNA large subunit methyltransferase H.